Consider the following 53-residue polypeptide: Conotoxin Cal6.27 (53 aa).

The first 24 residues, 1–24 (MKLTCVLIAAMLLLAVCQLDSADA), serve as a signal peptide directing secretion. Cystine bridges form between Cys-29-Cys-43, Cys-36-Cys-47, and Cys-42-Cys-51.

Belongs to the conotoxin O1 superfamily. As to expression, expressed by the venom duct.

It localises to the secreted. In terms of biological role, probable neurotoxin. This is Conotoxin Cal6.27 from Californiconus californicus (California cone).